We begin with the raw amino-acid sequence, 235 residues long: V-type proton ATPase subunit E2 (235 aa).

At M1 the chain carries N-acetylmethionine. Residues K8–I64 adopt a coiled-coil conformation.

This sequence belongs to the V-ATPase E subunit family. As to quaternary structure, V-ATPase is a heteromultimeric enzyme composed of a peripheral catalytic V1 complex (components A to H) attached to an integral membrane V0 proton pore complex (components: a, c, c'', d and e).

The protein resides in the vacuole membrane. Functionally, subunit of the peripheral V1 complex of vacuolar ATPase essential for assembly or catalytic function. V-ATPase is responsible for acidifying a variety of intracellular compartments in eukaryotic cells. This Arabidopsis thaliana (Mouse-ear cress) protein is V-type proton ATPase subunit E2 (VHA-E2).